The sequence spans 122 residues: ORF7a protein (122 aa).

Positions methionine 1–cysteine 15 are cleaved as a signal peptide. The region spanning glutamate 16–serine 81 is the X4e domain. The Virion surface segment spans residues glutamate 16 to glutamate 96. Cystine bridges form between cysteine 23–cysteine 58 and cysteine 35–cysteine 67. Residues leucine 97–isoleucine 117 traverse the membrane as a helical segment. Over lysine 118–glutamate 122 the chain is Intravirion. Positions lysine 118–glutamate 122 match the Di-lysine motif motif.

As to quaternary structure, interacts with the spike glycoprotein. Interacts with M protein. Interacts with E protein. Interacts with the ORF3a protein. Interacts with human SGT. Interacts with host ITGAL. Interacts with host BST2.

Its subcellular location is the virion. The protein localises to the host endoplasmic reticulum membrane. It localises to the host endoplasmic reticulum-Golgi intermediate compartment membrane. It is found in the host Golgi apparatus membrane. Its function is as follows. Plays a role as antagonist of host tetherin (BST2), disrupting its antiviral effect. Acts by binding to BST2 thereby interfering with its glycosylation. May suppress small interfering RNA (siRNA). May bind to host ITGAL, thereby playing a role in attachment or modulation of leukocytes. In Severe acute respiratory syndrome coronavirus (SARS-CoV), this protein is ORF7a protein.